A 174-amino-acid chain; its full sequence is uncharacterized protein (174 aa).

This sequence belongs to the NAD(P)H dehydrogenase (quinone) family.

This is an uncharacterized protein from Bacillus subtilis (strain 168).